Here is a 237-residue protein sequence, read N- to C-terminus: Orotidine 5'-phosphate decarboxylase (237 aa).

Residues Asp11, Lys34, 61 to 70 (DLKLHDIPNT), Thr124, Arg186, Gln195, Gly215, and Arg216 each bind substrate. Catalysis depends on Lys63, which acts as the Proton donor.

It belongs to the OMP decarboxylase family. Type 1 subfamily. Homodimer.

The catalysed reaction is orotidine 5'-phosphate + H(+) = UMP + CO2. It functions in the pathway pyrimidine metabolism; UMP biosynthesis via de novo pathway; UMP from orotate: step 2/2. Catalyzes the decarboxylation of orotidine 5'-monophosphate (OMP) to uridine 5'-monophosphate (UMP). In Lactococcus lactis subsp. lactis (strain IL1403) (Streptococcus lactis), this protein is Orotidine 5'-phosphate decarboxylase.